The primary structure comprises 181 residues: NAD(P)H-quinone oxidoreductase subunit I, chloroplastic (181 aa).

4Fe-4S ferredoxin-type domains lie at 52–81 (GRIH…VDWE) and 92–121 (KSYS…MTEE). [4Fe-4S] cluster-binding residues include cysteine 61, cysteine 64, cysteine 67, cysteine 71, cysteine 101, cysteine 104, cysteine 107, and cysteine 111.

The protein belongs to the complex I 23 kDa subunit family. NDH is composed of at least 16 different subunits, 5 of which are encoded in the nucleus. Requires [4Fe-4S] cluster as cofactor.

It is found in the plastid. Its subcellular location is the chloroplast thylakoid membrane. It catalyses the reaction a plastoquinone + NADH + (n+1) H(+)(in) = a plastoquinol + NAD(+) + n H(+)(out). The enzyme catalyses a plastoquinone + NADPH + (n+1) H(+)(in) = a plastoquinol + NADP(+) + n H(+)(out). Its function is as follows. NDH shuttles electrons from NAD(P)H:plastoquinone, via FMN and iron-sulfur (Fe-S) centers, to quinones in the photosynthetic chain and possibly in a chloroplast respiratory chain. The immediate electron acceptor for the enzyme in this species is believed to be plastoquinone. Couples the redox reaction to proton translocation, and thus conserves the redox energy in a proton gradient. The protein is NAD(P)H-quinone oxidoreductase subunit I, chloroplastic of Zygnema circumcarinatum (Green alga).